The primary structure comprises 419 residues: Adenylosuccinate synthetase (419 aa).

GTP-binding positions include G11 to K17 and G39 to T41. The Proton acceptor role is filled by D12. 2 residues coordinate Mg(2+): D12 and G39. Residues D12 to K15, N37 to H40, T129, R143, N218, T233, and R297 each bind IMP. Catalysis depends on H40, which acts as the Proton donor. A substrate-binding site is contributed by V293–R299. Residues R299, K325–D327, and G407–G409 each bind GTP.

This sequence belongs to the adenylosuccinate synthetase family. Homodimer. Mg(2+) serves as cofactor.

It localises to the cytoplasm. The enzyme catalyses IMP + L-aspartate + GTP = N(6)-(1,2-dicarboxyethyl)-AMP + GDP + phosphate + 2 H(+). Its pathway is purine metabolism; AMP biosynthesis via de novo pathway; AMP from IMP: step 1/2. Its function is as follows. Plays an important role in the de novo pathway and in the salvage pathway of purine nucleotide biosynthesis. Catalyzes the first committed step in the biosynthesis of AMP from IMP. This is Adenylosuccinate synthetase from Coccidioides posadasii (strain C735) (Valley fever fungus).